The chain runs to 233 residues: Cytidylate kinase (233 aa).

ATP is bound at residue 15 to 23 (GPSGAGKSS).

The protein belongs to the cytidylate kinase family. Type 1 subfamily.

Its subcellular location is the cytoplasm. The enzyme catalyses CMP + ATP = CDP + ADP. It carries out the reaction dCMP + ATP = dCDP + ADP. This chain is Cytidylate kinase, found in Citrifermentans bemidjiense (strain ATCC BAA-1014 / DSM 16622 / JCM 12645 / Bem) (Geobacter bemidjiensis).